The following is a 364-amino-acid chain: Dihydroorotate dehydrogenase (quinone) (364 aa).

FMN-binding positions include 61–65 (AGFDK) and T85. Position 65 (K65) interacts with substrate. 110–114 (NRMGF) contributes to the substrate binding site. The FMN site is built by N139 and N170. N170 contributes to the substrate binding site. The active-site Nucleophile is the S173. N175 serves as a coordination point for substrate. The FMN site is built by K214 and A242. A substrate-binding site is contributed by 243–244 (NT). FMN contacts are provided by residues G266, G295, and 316–317 (YS).

The protein belongs to the dihydroorotate dehydrogenase family. Type 2 subfamily. As to quaternary structure, monomer. FMN is required as a cofactor.

The protein resides in the cell membrane. It catalyses the reaction (S)-dihydroorotate + a quinone = orotate + a quinol. It functions in the pathway pyrimidine metabolism; UMP biosynthesis via de novo pathway; orotate from (S)-dihydroorotate (quinone route): step 1/1. Catalyzes the conversion of dihydroorotate to orotate with quinone as electron acceptor. In Rhodopseudomonas palustris (strain ATCC BAA-98 / CGA009), this protein is Dihydroorotate dehydrogenase (quinone).